The primary structure comprises 148 residues: D-aminoacyl-tRNA deacylase (148 aa).

The short motif at 137–138 (GP) is the Gly-cisPro motif, important for rejection of L-amino acids element.

The protein belongs to the DTD family. As to quaternary structure, homodimer.

It localises to the cytoplasm. The enzyme catalyses glycyl-tRNA(Ala) + H2O = tRNA(Ala) + glycine + H(+). It carries out the reaction a D-aminoacyl-tRNA + H2O = a tRNA + a D-alpha-amino acid + H(+). An aminoacyl-tRNA editing enzyme that deacylates mischarged D-aminoacyl-tRNAs. Also deacylates mischarged glycyl-tRNA(Ala), protecting cells against glycine mischarging by AlaRS. Acts via tRNA-based rather than protein-based catalysis; rejects L-amino acids rather than detecting D-amino acids in the active site. By recycling D-aminoacyl-tRNA to D-amino acids and free tRNA molecules, this enzyme counteracts the toxicity associated with the formation of D-aminoacyl-tRNA entities in vivo and helps enforce protein L-homochirality. The polypeptide is D-aminoacyl-tRNA deacylase (Oenococcus oeni (strain ATCC BAA-331 / PSU-1)).